Reading from the N-terminus, the 5099-residue chain is Malformin synthetase mlfA (5099 aa).

Positions 224–615 (QRHAADRPHS…CGRADTQVKL (392 aa)) are adenylation 1. In terms of domain architecture, Carrier 1 spans 756 to 829 (THLENEIQLA…EAASLAKVRD (74 aa)). Ser790 bears the O-(pantetheine 4'-phosphoryl)serine mark. The condensation 1 stretch occupies residues 867–1297 (EDVFPCTSMQ…PVDSLTLLKP (431 aa)). The segment at 1325-1717 (DRWVNRQPDT…GRKDTQVKLR (393 aa)) is adenylation 2. The Carrier 2 domain maps to 1857 to 1934 (ARAPELERTL…QIATQCEGIA (78 aa)). Ser1894 bears the O-(pantetheine 4'-phosphoryl)serine mark. Residues 1995 to 2040 (MQQESSSSPAPSVSSSSSSSSAPKPLLAQPEPPTNLRDSVPEPFSL) are disordered. The span at 1999 to 2017 (SSSSPAPSVSSSSSSSSAP) shows a compositional bias: low complexity. Residues 2067–2482 (EDIYPATPLQ…ALSPGDKKVL (416 aa)) are condensation 2. The segment at 2505–2897 (LSTPHAPAVC…VGRKDGQLKL (393 aa)) is adenylation 3. Residues 3032–3108 (RPATAQERGL…RLVLHLQNTS (77 aa)) enclose the Carrier 3 domain. An O-(pantetheine 4'-phosphoryl)serine modification is found at Ser3069. Condensation regions lie at residues 3125 to 3589 (WVHL…TYDQ) and 3610 to 4033 (DIYP…QQAM). Positions 4058-4446 (YANREAVCAW…VGRKDSQIKF (389 aa)) are adenylation 4. The 77-residue stretch at 4581–4657 (PPSTGMQQGI…DLAEHISSRV (77 aa)) folds into the Carrier 4 domain. Residue Ser4618 is modified to O-(pantetheine 4'-phosphoryl)serine. The tract at residues 4696 to 5017 (DILPTTGFQR…LQTVVQHQNV (322 aa)) is condensation 5.

Belongs to the NRP synthetase family.

Its pathway is secondary metabolite biosynthesis. Functionally, nonribosomal peptide synthetase; part of the gene cluster that mediates the biosynthesis of malformins, cyclic pentapeptides with a disulfide bond between 2 consecutive cysteins, that show potential anti-tumor as well as antimalarial and antitrypanosomal properties. The nonribosomal peptide synthetase mlfA is responsible of the formation of the cyclic pentapeptide. The malformin biosynthesis clusters in malformin-producing fungi also contain enzymes involved in the formation of the disulfide bond between the two consecutive cysteins within malformins, in addition to additional tailoring enzymes such as methyltransferases or oxidoreductases. They are also composed of up to 4 major facilitator superfamily transporters, and transcription factors probably involved in the regulation of the expression of those clusters. The polypeptide is Malformin synthetase mlfA (Aspergillus sclerotiicarbonarius (strain CBS 121057 / IBT 28362)).